The following is a 110-amino-acid chain: UPF0060 membrane protein BTH_I2792 (110 aa).

The next 4 membrane-spanning stretches (helical) occupy residues 9–29 (ALFVLTAVAEIVGCYLPWLVL), 34–54 (PVWLLAPAALSLALFAWLLTL), 64–84 (AAYGGVYIAVALAWLRIVDGV), and 86–106 (LSRWDAAGAALALAGMSVIAL).

The protein belongs to the UPF0060 family.

The protein localises to the cell inner membrane. In Burkholderia thailandensis (strain ATCC 700388 / DSM 13276 / CCUG 48851 / CIP 106301 / E264), this protein is UPF0060 membrane protein BTH_I2792.